The primary structure comprises 334 residues: Mevalonate kinase (334 aa).

110–120 provides a ligand contact to ATP; the sequence is PVGAGLGSSAA. D161 acts as the Proton acceptor in catalysis.

It belongs to the GHMP kinase family. Mevalonate kinase subfamily. Homodimer. Requires Mg(2+) as cofactor.

The protein localises to the cytoplasm. The catalysed reaction is (R)-mevalonate + ATP = (R)-5-phosphomevalonate + ADP + H(+). It participates in isoprenoid biosynthesis; isopentenyl diphosphate biosynthesis via mevalonate pathway; isopentenyl diphosphate from (R)-mevalonate: step 1/3. Catalyzes the phosphorylation of (R)-mevalonate (MVA) to (R)-mevalonate 5-phosphate (MVAP). Functions in the mevalonate (MVA) pathway leading to isopentenyl diphosphate (IPP), a key precursor for the biosynthesis of isoprenoid compounds such as archaeal membrane lipids. This chain is Mevalonate kinase, found in Pyrococcus furiosus (strain ATCC 43587 / DSM 3638 / JCM 8422 / Vc1).